The sequence spans 787 residues: Bifunctional dethiobiotin synthetase/adenosylmethionine-8-amino-7-oxononanoate aminotransferase (787 aa).

23-28 (DVGKTI) is a binding site for ATP. Thr27 provides a ligand contact to Mg(2+). Thr54 provides a ligand contact to substrate. Mg(2+) is bound by residues Asp61 and Glu123. ATP-binding positions include 123-126 (ETAG) and 184-185 (KD). Residue 323-324 (WW) coordinates (8S)-8-amino-7-oxononanoate. Residue 384 to 385 (GS) participates in pyridoxal 5'-phosphate binding. Tyr421 provides a ligand contact to (8S)-8-amino-7-oxononanoate. Asp582 contacts pyridoxal 5'-phosphate. (8S)-8-amino-7-oxononanoate is bound by residues Lys611 and Gly645. Position 646-647 (646-647 (HS)) interacts with pyridoxal 5'-phosphate. Arg756 lines the (8S)-8-amino-7-oxononanoate pocket.

It in the N-terminal section; belongs to the dethiobiotin synthetase family. In the C-terminal section; belongs to the class-III pyridoxal-phosphate-dependent aminotransferase family. BioA subfamily. As to quaternary structure, homodimer. Mg(2+) serves as cofactor. Requires pyridoxal 5'-phosphate as cofactor.

The protein localises to the mitochondrion matrix. The catalysed reaction is (7R,8S)-7,8-diammoniononanoate + CO2 + ATP = (4R,5S)-dethiobiotin + ADP + phosphate + 3 H(+). It carries out the reaction (8S)-8-amino-7-oxononanoate + S-adenosyl-L-methionine = S-adenosyl-4-methylsulfanyl-2-oxobutanoate + (7R,8S)-7,8-diammoniononanoate. It functions in the pathway cofactor biosynthesis; biotin biosynthesis; biotin from 7,8-diaminononanoate: step 1/2. The protein operates within cofactor biosynthesis; biotin biosynthesis; 7,8-diaminononanoate from 8-amino-7-oxononanoate (SAM route): step 1/1. Bifunctional enzyme; part of the cluster involved in the biosynthesis of biotin (also known as vitamin B8 or vitamin H), a water-soluble vitamin that functions as a prosthetic group of many carboxylases, such as acetyl-CoA carboxylase and pyruvate carboxylase. Catalyzes a mechanistically unusual reaction, the ATP-dependent insertion of CO2 between the N7 and N8 nitrogen atoms of 7,8-diaminopelargonic acid (DAPA) to form an ureido ring. Also catalyzes the transfer of the alpha-amino group from S-adenosyl-L-methionine (SAM) to 7-keto-8-aminopelargonic acid (KAPA) to form 7,8-diaminopelargonic acid (DAPA). It is the only animotransferase known to utilize SAM as an amino donor. The chain is Bifunctional dethiobiotin synthetase/adenosylmethionine-8-amino-7-oxononanoate aminotransferase from Emericella nidulans (strain FGSC A4 / ATCC 38163 / CBS 112.46 / NRRL 194 / M139) (Aspergillus nidulans).